The sequence spans 317 residues: Melanocyte-stimulating hormone receptor (317 aa).

The Extracellular portion of the chain corresponds to 1 to 37 (MPMQGAQRRLLGSLNSTPTATPNLGLAANHTGAPCLE). N-linked (GlcNAc...) asparagine glycosylation occurs at N29. The helical transmembrane segment at 38–63 (VSIPDGLFLSLGLVSLVENVLVVAAI) threads the bilayer. The Cytoplasmic segment spans residues 64–72 (AKNRNLHSP). The chain crosses the membrane as a helical span at residues 73-93 (MYCFICCLALSDLLVSGSNML). Residues 94–118 (EMAVILLLEAGALATRASVVQQLQN) are Extracellular-facing. The helical transmembrane segment at 119–140 (TIDVLTCSSMLCSLCFLGAIAV) threads the bilayer. Residues 141-163 (DRYVSIFYALRYHSIVTLPRARR) are Cytoplasmic-facing. A helical transmembrane segment spans residues 164–183 (AIAAIWVASVLSSTLFIAYC). The Extracellular portion of the chain corresponds to 184–191 (DHAAVLLC). A helical membrane pass occupies residues 192 to 211 (LVVFFLAMLVLMAVLYVHML). Residues 212–240 (ARACQHAQGITRLHKRQLPAHQGFGLRGA) are Cytoplasmic-facing. A helical transmembrane segment spans residues 241–266 (ATLTILLGIFFLCWGPFFLHLMLVVL). The Extracellular segment spans residues 267–279 (CPQHLTCSCIFKN). Residues 280 to 300 (FKVFLTLIICNTIIDPLIYAF) traverse the membrane as a helical segment. The Cytoplasmic segment spans residues 301-317 (RSQELCRTLREVLLCSW). C315 is lipidated: S-palmitoyl cysteine.

This sequence belongs to the G-protein coupled receptor 1 family. In terms of assembly, interacts with MGRN1, but does not undergo MGRN1-mediated ubiquitination; this interaction competes with GNAS-binding and thus inhibits agonist-induced cAMP production. Interacts with OPN3; the interaction results in a decrease in MC1R-mediated cAMP signaling and ultimately a decrease in melanin production in melanocytes.

The protein localises to the cell membrane. In terms of biological role, receptor for MSH (alpha, beta and gamma) and ACTH. The activity of this receptor is mediated by G proteins which activate adenylate cyclase. Mediates melanogenesis, the production of eumelanin (black/brown) and phaeomelanin (red/yellow), via regulation of cAMP signaling in melanocytes. The protein is Melanocyte-stimulating hormone receptor (MC1R) of Alouatta pigra (Guatemalan howler monkey).